The chain runs to 73 residues: Conotoxin Im14.3 (73 aa).

An N-terminal signal peptide occupies residues 1–17 (MGVFRCCLAAALVVVCL). A propeptide spanning residues 18 to 35 (SRMGGTEPLESNHEDERR) is cleaved from the precursor. Residues 22-42 (GTEPLESNHEDERRADDTSGD) are disordered. Over residues 27-38 (ESNHEDERRADD) the composition is skewed to basic and acidic residues. The ShKT domain maps to 44–73 (CVDTNEDCVNWASTGQCEANPSYMRENCRK).

Post-translationally, contain 2 disulfide bonds. Expressed by the venom duct.

Its subcellular location is the secreted. Probable neurotoxin. The sequence is that of Conotoxin Im14.3 from Conus imperialis (Imperial cone).